The following is a 395-amino-acid chain: ATP-dependent RNA helicase eIF4A (395 aa).

A Q motif motif is present at residues 22 to 50 (TSFDDLGLKDELLRGIYGYGFENPSSIQQ). Positions 53–223 (ILPVIKGNDV…GKFMRDPVRI (171 aa)) constitute a Helicase ATP-binding domain. 66–73 (AQSGTGKT) contributes to the ATP binding site. A DEAD box motif is present at residues 171–174 (DEAD). The region spanning 234-395 (GIKQFYIDVE…EMPTNIADLI (162 aa)) is the Helicase C-terminal domain.

It belongs to the DEAD box helicase family. eIF4A subfamily. As to quaternary structure, component of the eIF4F complex, which composition varies with external and internal environmental conditions. It is composed of at least eIF4A, eIF4E and eIF4G.

Its subcellular location is the cytoplasm. It carries out the reaction ATP + H2O = ADP + phosphate + H(+). Functionally, ATP-dependent RNA helicase which is a subunit of the eIF4F complex involved in cap recognition and is required for mRNA binding to ribosome. In the current model of translation initiation, eIF4A unwinds RNA secondary structures in the 5'-UTR of mRNAs which is necessary to allow efficient binding of the small ribosomal subunit, and subsequent scanning for the initiator codon. The polypeptide is ATP-dependent RNA helicase eIF4A (TIF1) (Yarrowia lipolytica (strain CLIB 122 / E 150) (Yeast)).